Consider the following 502-residue polypeptide: Lanosterol 14-alpha demethylase (502 aa).

Residues 22–42 (GNLASMLLIACAFTLSLVYLF) form a helical membrane-spanning segment. A heme-binding site is contributed by Cys-448.

The protein belongs to the cytochrome P450 family. Heme is required as a cofactor. Post-translationally, ubiquitinated by MARCHF6, leading to proteasomal degradation.

Its subcellular location is the endoplasmic reticulum membrane. The protein localises to the microsome membrane. The enzyme catalyses a 14alpha-methyl steroid + 3 reduced [NADPH--hemoprotein reductase] + 3 O2 = a Delta(14) steroid + formate + 3 oxidized [NADPH--hemoprotein reductase] + 4 H2O + 4 H(+). The catalysed reaction is lanosterol + 3 reduced [NADPH--hemoprotein reductase] + 3 O2 = 4,4-dimethyl-5alpha-cholesta-8,14,24-trien-3beta-ol + formate + 3 oxidized [NADPH--hemoprotein reductase] + 4 H2O + 4 H(+). It catalyses the reaction 24,25-dihydrolanosterol + 3 reduced [NADPH--hemoprotein reductase] + 3 O2 = 4,4-dimethyl-8,14-cholestadien-3beta-ol + formate + 3 oxidized [NADPH--hemoprotein reductase] + 4 H2O + 4 H(+). It carries out the reaction a 14alpha-methyl steroid + reduced [NADPH--hemoprotein reductase] + O2 = a 14alpha-hydroxymethyl steroid + oxidized [NADPH--hemoprotein reductase] + H2O + H(+). The enzyme catalyses a 14alpha-hydroxymethyl steroid + reduced [NADPH--hemoprotein reductase] + O2 = a 14alpha-formyl steroid + oxidized [NADPH--hemoprotein reductase] + 2 H2O + H(+). The catalysed reaction is a 14alpha-formyl steroid + reduced [NADPH--hemoprotein reductase] + O2 = a Delta(14) steroid + formate + oxidized [NADPH--hemoprotein reductase] + H2O + 2 H(+). It catalyses the reaction lanosterol + reduced [NADPH--hemoprotein reductase] + O2 = 32-hydroxylanosterol + oxidized [NADPH--hemoprotein reductase] + H2O + H(+). It carries out the reaction 32-hydroxylanosterol + reduced [NADPH--hemoprotein reductase] + O2 = 32-oxolanosterol + oxidized [NADPH--hemoprotein reductase] + 2 H2O + H(+). The enzyme catalyses 32-oxolanosterol + reduced [NADPH--hemoprotein reductase] + O2 = 4,4-dimethyl-5alpha-cholesta-8,14,24-trien-3beta-ol + formate + oxidized [NADPH--hemoprotein reductase] + H2O + 2 H(+). The catalysed reaction is 24,25-dihydrolanosterol + reduced [NADPH--hemoprotein reductase] + O2 = 32-hydroxy-24,25-dihydrolanosterol + oxidized [NADPH--hemoprotein reductase] + H2O + H(+). It catalyses the reaction 32-hydroxy-24,25-dihydrolanosterol + reduced [NADPH--hemoprotein reductase] + O2 = 32-oxo-24,25-dihydrolanosterol + oxidized [NADPH--hemoprotein reductase] + 2 H2O + H(+). It carries out the reaction 32-oxo-24,25-dihydrolanosterol + reduced [NADPH--hemoprotein reductase] + O2 = 4,4-dimethyl-8,14-cholestadien-3beta-ol + formate + oxidized [NADPH--hemoprotein reductase] + H2O + 2 H(+). Its pathway is steroid biosynthesis; zymosterol biosynthesis; zymosterol from lanosterol: step 1/6. Inhibited by azalanstat. Inhibited by azole antifungal agents ketoconazole, itraconazole and fluconazole. Functionally, sterol 14alpha-demethylase that plays a critical role in the cholesterol biosynthesis pathway, being cholesterol the major sterol component in mammalian membranes as well as a precursor for bile acid and steroid hormone synthesis. Cytochrome P450 monooxygenase that catalyzes the three-step oxidative removal of the 14alpha-methyl group (C-32) of sterols such as lanosterol (lanosta-8,24-dien-3beta-ol) and 24,25-dihydrolanosterol (DHL) in the form of formate, and converts the sterols to 4,4-dimethyl-5alpha-cholesta-8,14,24-trien-3beta-ol and 4,4-dimethyl-8,14-cholestadien-3beta-ol, respectively, which are intermediates of cholesterol biosynthesis. Can also demethylate substrates not intrinsic to mammals, such as eburicol (24-methylene-24,25-dihydrolanosterol), but at a lower rate than DHL. The protein is Lanosterol 14-alpha demethylase of Bos taurus (Bovine).